Consider the following 359-residue polypeptide: sn-1 acyl-lipid omega-3 desaturase (ferredoxin) (359 aa).

Helical transmembrane passes span 44–64 and 67–87; these read LGYF…AAYL and WFFY…LFVV. The short motif at 89 to 93 is the Histidine box-1 element; it reads HDCGH. The short motif at 125–129 is the Histidine box-2 element; that stretch reads HRTHH. 3 helical membrane-spanning segments follow: residues 153–173, 206–226, and 228–248; these read AWYE…IYLF, LAAF…LFLL, and FYVA…FLHH. A Histidine box-3 motif is present at residues 291–295; it reads HHIFS.

This sequence belongs to the fatty acid desaturase type 2 family. Fe(2+) serves as cofactor.

The protein localises to the membrane. The enzyme catalyses a 1-[(9Z,12Z)-octadecdienoyl]-2-acyl-glycerolipid + 2 reduced [2Fe-2S]-[ferredoxin] + O2 + 2 H(+) = a 1-[(9Z,12Z,15Z)-octadectrienoyl]-2-acyl-glycerolipid + 2 oxidized [2Fe-2S]-[ferredoxin] + 2 H2O. It catalyses the reaction a 1-[(6Z,9Z,12Z)-octadectrienoyl]-2-acyl-glycerolipid + 2 reduced [2Fe-2S]-[ferredoxin] + O2 + 2 H(+) = a 1-[(6Z,9Z,12Z,15Z)-octadectetraenoyl]-2-acyl-glycerolipid + 2 oxidized [2Fe-2S]-[ferredoxin] + 2 H2O. Its pathway is lipid metabolism; polyunsaturated fatty acid biosynthesis. Its function is as follows. Desaturase involved in fatty acid biosynthesis. Introduces a double bond at carbon 15 of linoleoyl and gamma-linolenoyl groups attached to the sn-1 position of the glycerol moiety of membrane glycerolipids. The polypeptide is sn-1 acyl-lipid omega-3 desaturase (ferredoxin) (Synechocystis sp. (strain ATCC 27184 / PCC 6803 / Kazusa)).